Here is a 343-residue protein sequence, read N- to C-terminus: Endoglucanase C (343 aa).

The active-site Proton donor is the Glu140. The active-site Nucleophile is the Glu280.

This sequence belongs to the glycosyl hydrolase 5 (cellulase A) family.

The enzyme catalyses Endohydrolysis of (1-&gt;4)-beta-D-glucosidic linkages in cellulose, lichenin and cereal beta-D-glucans.. It functions in the pathway glycan metabolism; cellulose degradation. Functionally, this enzyme catalyzes the endohydrolysis of 1,4-beta-glucosidic linkages in cellulose, lichenin and cereal beta-D-glucans. The polypeptide is Endoglucanase C (celC) (Acetivibrio thermocellus (strain ATCC 27405 / DSM 1237 / JCM 9322 / NBRC 103400 / NCIMB 10682 / NRRL B-4536 / VPI 7372) (Clostridium thermocellum)).